We begin with the raw amino-acid sequence, 198 residues long: CXXC-type zinc finger protein 4 (198 aa).

The segment at 114 to 134 is disordered; the sequence is NHSSSSSSSSGGAGGANPAKK. The CXXC-type zinc-finger motif lies at 132-173; that stretch reads AKKKRKRCGVCVPCKRLINCGVCSSCRNRKTGHQICKFRKCE. 6 residues coordinate Zn(2+): cysteine 139, cysteine 142, cysteine 145, cysteine 151, cysteine 154, and cysteine 157. The tract at residues 161–166 is interaction with DVL1; it reads KTGHQI. Zn(2+) is bound by residues cysteine 167 and cysteine 172.

Interacts with the PDZ domain of DVL1.

It is found in the cytoplasm. In terms of biological role, acts as a negative regulator of the Wnt signaling pathway via its interaction with DVL1. Binds preferentially to DNA containing cytidine-phosphate-guanosine (CpG) dinucleotides over CpH (H=A, T, and C), hemimethylated-CpG and hemimethylated-hydroxymethyl-CpG. In Homo sapiens (Human), this protein is CXXC-type zinc finger protein 4 (CXXC4).